The following is a 266-amino-acid chain: GATA-type zinc finger protein 1 (266 aa).

3 disordered regions span residues 1–31 (MEAA…KSRP), 106–129 (TQCP…PRKQ), and 171–191 (CSQK…SSEA). The segment covering 106–121 (TQCPNLEISSATSPAS) has biased composition (polar residues). The segment at 197-221 (CASCRTQRTPLWRDAEDGTPLCNAC) adopts a GATA-type zinc-finger fold.

In terms of tissue distribution, specifically expressed in adult testis and ovary. Expressed at high levels in the somatic cells of the developing gonads, including Leydig cells in the testes and granulosa cells in the ovaries.

It is found in the nucleus. Its function is as follows. Transcriptional regulator that plays a key role in germ cell development. Determines the oogenic fate by activating key genes for the oogenic program and meiotic prophase entry. Acts downstream of bone morphogenetic protein (BMP) by regulating expression of genes required for the oogenic programs, which are repressed by Polycomb activities in sexually uncommitted germ cells. Regulates expression of STRA8, a central downstream effector for the meiotic program. Acts independently of retinoic acid (RA). In males, not required for germ-cell sex determination, but required to allow the spermatogonia to efficiently accomplish the meiotic prophase. This Mus musculus (Mouse) protein is GATA-type zinc finger protein 1.